Consider the following 182-residue polypeptide: MSNQLSPKPPVNPIVMGKIGSAYGIRGWLRVFSSTEDAESIFDYQPWFIQSKSGWQLVEIEGWKYHNQDLIIKVKGTDDRDAANLLTNCEIVVDSSQLPDLGEGDYYWKDLMGCQVVTVAGYELGKVIDMMETGSNDVMVIKANLKDAFGVKERLVPFLTEQVVKRVDLSTQTIEVDWDPGF.

A PRC barrel domain is found at 102-182 (GEGDYYWKDL…TIEVDWDPGF (81 aa)).

Belongs to the RimM family. As to quaternary structure, binds ribosomal protein uS19.

Its subcellular location is the cytoplasm. Its function is as follows. An accessory protein needed during the final step in the assembly of 30S ribosomal subunit, possibly for assembly of the head region. Essential for efficient processing of 16S rRNA. May be needed both before and after RbfA during the maturation of 16S rRNA. It has affinity for free ribosomal 30S subunits but not for 70S ribosomes. The sequence is that of Ribosome maturation factor RimM from Pectobacterium carotovorum subsp. carotovorum (strain PC1).